Consider the following 525-residue polypeptide: Phosphatidylinositol 4-kinase alpha 2 (525 aa).

Residues 163–278 (SDVRQHIVDG…VKPQACIFKV (116 aa)) are pleckstrin homology (PH) domain conferring phosphoinositide binding specificity. The PI3K/PI4K catalytic domain maps to 239–509 (VDSGIPLQSA…VCTDAYNKWT (271 aa)). Residues 245 to 251 (LQSAAKV) form a G-loop region. The interval 373–381 (QPKDRHNGN) is catalytic loop. The interval 392–417 (HIDFGFILETSPGGNMRFENAHFKLS) is activation loop.

This sequence belongs to the PI3/PI4-kinase family. Type III PI4K subfamily.

It is found in the membrane. It catalyses the reaction a 1,2-diacyl-sn-glycero-3-phospho-(1D-myo-inositol) + ATP = a 1,2-diacyl-sn-glycero-3-phospho-(1D-myo-inositol 4-phosphate) + ADP + H(+). In terms of biological role, acts on phosphatidylinositol (PtdIns) in the first committed step in the production of the second messenger inositol-1,4,5,-trisphosphate. This Arabidopsis thaliana (Mouse-ear cress) protein is Phosphatidylinositol 4-kinase alpha 2 (PI4KA2).